Here is a 66-residue protein sequence, read N- to C-terminus: Large ribosomal subunit protein bL31 (66 aa).

Zn(2+) contacts are provided by C16, C18, C36, and C39.

This sequence belongs to the bacterial ribosomal protein bL31 family. Type A subfamily. Part of the 50S ribosomal subunit. Zn(2+) serves as cofactor.

Binds the 23S rRNA. In Priestia megaterium (Bacillus megaterium), this protein is Large ribosomal subunit protein bL31.